Consider the following 346-residue polypeptide: Tyrosine--tRNA ligase (346 aa).

The 'HIGH' region motif lies at 47 to 56 (PSGRIHIAQA). The 'KMSKS' region motif lies at 230-234 (KMSKS). Lysine 233 lines the ATP pocket.

The protein belongs to the class-I aminoacyl-tRNA synthetase family. In terms of assembly, homodimer.

It carries out the reaction tRNA(Tyr) + L-tyrosine + ATP = L-tyrosyl-tRNA(Tyr) + AMP + diphosphate + H(+). Functionally, catalyzes the attachment of tyrosine to tRNA(Tyr) in a two-step reaction: tyrosine is first activated by ATP to form Tyr-AMP and then transferred to the acceptor end of tRNA(Tyr). The sequence is that of Tyrosine--tRNA ligase (YARS) from Acanthamoeba polyphaga (Amoeba).